The chain runs to 468 residues: Adenylyltransferase and sulfurtransferase MOCS3-1 (468 aa).

ATP is bound by residues glycine 111, aspartate 132, asparagine 139 to arginine 143, lysine 156, and aspartate 200 to asparagine 201. Positions 241 and 244 each coordinate Zn(2+). Cysteine 258 (glycyl thioester intermediate; for adenylyltransferase activity) is an active-site residue. Zn(2+)-binding residues include cysteine 316 and cysteine 319. A Rhodanese domain is found at aspartate 371 to proline 466. Catalysis depends on cysteine 426, which acts as the Cysteine persulfide intermediate; for sulfurtransferase activity.

In the N-terminal section; belongs to the HesA/MoeB/ThiF family. UBA4 subfamily. Zn(2+) serves as cofactor.

It is found in the cytoplasm. It carries out the reaction [molybdopterin-synthase sulfur-carrier protein]-C-terminal Gly-Gly + ATP + H(+) = [molybdopterin-synthase sulfur-carrier protein]-C-terminal Gly-Gly-AMP + diphosphate. It catalyses the reaction [molybdopterin-synthase sulfur-carrier protein]-C-terminal Gly-Gly-AMP + S-sulfanyl-L-cysteinyl-[cysteine desulfurase] + AH2 = [molybdopterin-synthase sulfur-carrier protein]-C-terminal-Gly-aminoethanethioate + L-cysteinyl-[cysteine desulfurase] + A + AMP + 2 H(+). It participates in tRNA modification; 5-methoxycarbonylmethyl-2-thiouridine-tRNA biosynthesis. Its pathway is cofactor biosynthesis; molybdopterin biosynthesis. Its function is as follows. Plays a central role in 2-thiolation of mcm(5)S(2)U at tRNA wobble positions of cytosolic tRNA(Lys), tRNA(Glu) and tRNA(Gln). Also essential during biosynthesis of the molybdenum cofactor. Acts by mediating the C-terminal thiocarboxylation of sulfur carriers URM1 and MOCS2A. Its N-terminus first activates URM1 and MOCS2A as acyl-adenylates (-COAMP), then the persulfide sulfur on the catalytic cysteine is transferred to URM1 and MOCS2A to form thiocarboxylation (-COSH) of their C-terminus. The reaction probably involves hydrogen sulfide that is generated from the persulfide intermediate and that acts as a nucleophile towards URM1 and MOCS2A. Subsequently, a transient disulfide bond is formed. Does not use thiosulfate as sulfur donor; NFS1 probably acting as a sulfur donor for thiocarboxylation reactions. In Zea mays (Maize), this protein is Adenylyltransferase and sulfurtransferase MOCS3-1.